A 512-amino-acid polypeptide reads, in one-letter code: MRPSGEKVVKGHGQGNSGHSLSGMANYYRRKKGDAVFLNAKPLNSANAQAYLYGVRKYSIGLAERLDADYEAPPLDRKKSSDSTASNNPEFKPSVFYRNIDPINWFLRIIGVLPIVRHGPARAKFEMNSASFIYSVVFFVLLACYVGYVANNRIHIVRSLSGPFEEAVIAYLFLVNILPIMIIPILWYEARKIAKLFNDWDDFEVLYYQISGHSLPLKLRQKAVYIAIVLPILSVLSVVITHVTMSDLNINQVVPYCILDNLTAMLGAWWFLICEAMSITAHLLAERFQKALKHIGPAAMVADYRVLWLRLSKLTRDTGNALCYTFVFMSLYLFFIITLSIYGLMSQLSEGFGIKDIGLTITALWNIGLLFYICDEAHYASVNVRTNFQKKLLMVELNWMNSDAQTEINMFLRATEMNPSTINCGGFFDVNRTLFKGLLTTMVTYLVVLLQFQISIPTDKGDSEGANNITVVDFVMDSLDNDMSLMGASTLSTTTVGTTLPPPIMKLKGRKG.

A disordered region spans residues 1-24; that stretch reads MRPSGEKVVKGHGQGNSGHSLSGM. Residues 1 to 129 are Cytoplasmic-facing; the sequence is MRPSGEKVVK…PARAKFEMNS (129 aa). A helical membrane pass occupies residues 130–150; the sequence is ASFIYSVVFFVLLACYVGYVA. The Extracellular portion of the chain corresponds to 151–166; the sequence is NNRIHIVRSLSGPFEE. A helical membrane pass occupies residues 167–187; it reads AVIAYLFLVNILPIMIIPILW. At 188–222 the chain is on the cytoplasmic side; sequence YEARKIAKLFNDWDDFEVLYYQISGHSLPLKLRQK. The chain crosses the membrane as a helical span at residues 223–243; that stretch reads AVYIAIVLPILSVLSVVITHV. The Extracellular portion of the chain corresponds to 244-265; it reads TMSDLNINQVVPYCILDNLTAM. Asn261 carries an N-linked (GlcNAc...) asparagine glycan. A helical membrane pass occupies residues 266 to 285; it reads LGAWWFLICEAMSITAHLLA. Topologically, residues 286–324 are cytoplasmic; the sequence is ERFQKALKHIGPAAMVADYRVLWLRLSKLTRDTGNALCY. A helical transmembrane segment spans residues 325–345; the sequence is TFVFMSLYLFFIITLSIYGLM. Residues 346–350 are Extracellular-facing; that stretch reads SQLSE. The chain crosses the membrane as a helical span at residues 351 to 371; sequence GFGIKDIGLTITALWNIGLLF. At 372 to 436 the chain is on the cytoplasmic side; it reads YICDEAHYAS…FFDVNRTLFK (65 aa). The chain crosses the membrane as a helical span at residues 437-457; sequence GLLTTMVTYLVVLLQFQISIP. Residues 458–512 are Extracellular-facing; the sequence is TDKGDSEGANNITVVDFVMDSLDNDMSLMGASTLSTTTVGTTLPPPIMKLKGRKG. Asn468 is a glycosylation site (N-linked (GlcNAc...) asparagine).

Belongs to the insect chemoreceptor superfamily. Gustatory receptor (GR) family. Gr21a subfamily. In terms of assembly, gr21a and Gr63a probably form a heterodimer that responds to CO(2). In terms of tissue distribution, expressed in the medial aspect of the third antennal segment. Carbon dioxide-responsive neurons coexpress Gr21a and Gr63a in a pair of chemosensory receptors at both larval and adult life stages.

The protein localises to the cell membrane. Gustatory and odorant receptor which mediates acceptance or avoidance behavior, depending on its substrates. Gr21a and Gr63a together are sufficient for carbon dioxide detection and avoidance behavior. It is possible that the CO(2) receptors Gr63a and Gr21a activate the TRPC channels through Galpha49B and Plc21C. This innate olfactory avoidance behavior can be inhibited by inhibitory interactions of the odors such as 1-hexanol and 2,3-butanedione with Gr21a and Gr63a. This chain is Gustatory and odorant receptor 63a (Gr63a), found in Drosophila melanogaster (Fruit fly).